Here is a 142-residue protein sequence, read N- to C-terminus: Prefoldin subunit alpha 2 (142 aa).

It belongs to the prefoldin subunit alpha family. In terms of assembly, heterohexamer of two alpha and four beta subunits.

The protein localises to the cytoplasm. In terms of biological role, molecular chaperone capable of stabilizing a range of proteins. Seems to fulfill an ATP-independent, HSP70-like function in archaeal de novo protein folding. This Thermococcus kodakarensis (strain ATCC BAA-918 / JCM 12380 / KOD1) (Pyrococcus kodakaraensis (strain KOD1)) protein is Prefoldin subunit alpha 2.